Consider the following 619-residue polypeptide: Chaperone protein HscA homolog (619 aa).

Belongs to the heat shock protein 70 family.

Chaperone involved in the maturation of iron-sulfur cluster-containing proteins. Has a low intrinsic ATPase activity which is markedly stimulated by HscB. This is Chaperone protein HscA homolog from Pseudomonas aeruginosa (strain LESB58).